The primary structure comprises 908 residues: DNA mismatch repair protein MutS (908 aa).

Gly662–Ser669 lines the ATP pocket.

This sequence belongs to the DNA mismatch repair MutS family.

Its function is as follows. This protein is involved in the repair of mismatches in DNA. It is possible that it carries out the mismatch recognition step. This protein has a weak ATPase activity. This chain is DNA mismatch repair protein MutS, found in Rhizobium johnstonii (strain DSM 114642 / LMG 32736 / 3841) (Rhizobium leguminosarum bv. viciae).